The sequence spans 385 residues: Succinate--CoA ligase [ADP-forming] subunit beta (385 aa).

The region spanning 9–244 is the ATP-grasp domain; it reads KEILRKYGVP…QDEEDPLETR (236 aa). ATP contacts are provided by residues Lys-46, 53 to 55, Glu-99, Cys-102, and Glu-107; that span reads GRG. 2 residues coordinate Mg(2+): Asn-199 and Asp-213. Substrate-binding positions include Asn-264 and 321–323; that span reads GIM.

This sequence belongs to the succinate/malate CoA ligase beta subunit family. As to quaternary structure, heterotetramer of two alpha and two beta subunits. It depends on Mg(2+) as a cofactor.

It catalyses the reaction succinate + ATP + CoA = succinyl-CoA + ADP + phosphate. The enzyme catalyses GTP + succinate + CoA = succinyl-CoA + GDP + phosphate. It functions in the pathway carbohydrate metabolism; tricarboxylic acid cycle; succinate from succinyl-CoA (ligase route): step 1/1. Functionally, succinyl-CoA synthetase functions in the citric acid cycle (TCA), coupling the hydrolysis of succinyl-CoA to the synthesis of either ATP or GTP and thus represents the only step of substrate-level phosphorylation in the TCA. The beta subunit provides nucleotide specificity of the enzyme and binds the substrate succinate, while the binding sites for coenzyme A and phosphate are found in the alpha subunit. In Rickettsia bellii (strain OSU 85-389), this protein is Succinate--CoA ligase [ADP-forming] subunit beta.